The primary structure comprises 64 residues: Putative isoleucine--tRNA ligase (64 aa).

The protein belongs to the class-I aminoacyl-tRNA synthetase family. In terms of assembly, member of a complex that includes annexin.

The catalysed reaction is tRNA(Ile) + L-isoleucine + ATP = L-isoleucyl-tRNA(Ile) + AMP + diphosphate. The chain is Putative isoleucine--tRNA ligase from Physarum polycephalum (Slime mold).